A 192-amino-acid chain; its full sequence is Ornithine lipid N-methyltransferase (192 aa).

Belongs to the methyltransferase superfamily.

The enzyme catalyses an N(2)-[(3R)-3-(2-saturated-acyloxy)acyl]-L-ornithine lipid + 3 S-adenosyl-L-methionine = an N,N,N-trimethylornithine lipid + 3 S-adenosyl-L-homocysteine + 3 H(+). Catalyzes the 3-fold methylation of ornithine lipids. Forms ornithine lipids that are mono-, di-, and trimethylated on the delta-nitrogen of the ornithine head group. The polypeptide is Ornithine lipid N-methyltransferase (Singulisphaera acidiphila (strain ATCC BAA-1392 / DSM 18658 / VKM B-2454 / MOB10)).